Reading from the N-terminus, the 427-residue chain is Zinc finger protein 134 (427 aa).

K20 is covalently cross-linked (Glycyl lysine isopeptide (Lys-Gly) (interchain with G-Cter in SUMO2)). A C2H2-type 1 zinc finger spans residues 50-72; that stretch reads LPCDICGPILKDILHLDEHQGTH. The segment at 78–100 adopts a C2H2-type 2; degenerate zinc-finger fold; it reads HTCGACGRQFWFSANLHQYQKCY. Glycyl lysine isopeptide (Lys-Gly) (interchain with G-Cter in SUMO2) cross-links involve residues K135 and K139. 9 consecutive C2H2-type zinc fingers follow at residues 176–198, 204–226, 232–254, 260–282, 288–310, 316–338, 344–366, 372–394, and 400–422; these read YKCS…QRIH, YECS…QRIH, YECS…KRIH, YKCN…QRVH, YKCS…ESIH, YDCS…QRIH, FECI…QRVH, FVCS…QRVH, and YECS…QKVH.

Belongs to the krueppel C2H2-type zinc-finger protein family.

Its subcellular location is the nucleus. In terms of biological role, may be involved in transcriptional regulation. The sequence is that of Zinc finger protein 134 (ZNF134) from Homo sapiens (Human).